A 299-amino-acid chain; its full sequence is Protease HtpX homolog (299 aa).

The next 2 helical transmembrane spans lie at 15-35 (MFLT…VLWQ) and 37-57 (GVSY…QYYF). His140 serves as a coordination point for Zn(2+). The active site involves Glu141. His144 provides a ligand contact to Zn(2+). Transmembrane regions (helical) follow at residues 158-178 (FFAT…GAFG) and 187-207 (NNIM…YFLI). Residue Glu215 coordinates Zn(2+).

Belongs to the peptidase M48B family. Zn(2+) is required as a cofactor.

It is found in the cell membrane. The protein is Protease HtpX homolog of Moorella thermoacetica (strain ATCC 39073 / JCM 9320).